A 375-amino-acid polypeptide reads, in one-letter code: uncharacterized protein (375 aa).

The GP-PDE domain maps to 52-301; it reads VLLSAHRGSW…KQGFATYHES (250 aa).

This is an uncharacterized protein from Sinorhizobium fredii (strain NBRC 101917 / NGR234).